A 95-amino-acid polypeptide reads, in one-letter code: Mitochondrial import inner membrane translocase subunit Tim13 (95 aa).

An N-acetylmethionine modification is found at Met1. At Ser7 the chain carries Phosphoserine. A Twin CX3C motif motif is present at residues 46 to 69 (CFRKCIGKPGGSLDNSEQKCIAMC). 2 disulfides stabilise this stretch: Cys46/Cys69 and Cys50/Cys65. At Lys53 the chain carries N6-succinyllysine.

It belongs to the small Tim family. As to quaternary structure, heterohexamer; composed of 3 copies of TIMM8 (TIMM8A or TIMM8B) and 3 copies of TIMM13, named soluble 70 kDa complex. Associates with the TIM22 complex, whose core is composed of TIMM22. In terms of tissue distribution, ubiquitous, with highest expression in heart, kidney, liver and skeletal muscle.

The protein localises to the mitochondrion inner membrane. Functionally, mitochondrial intermembrane chaperone that participates in the import and insertion of some multi-pass transmembrane proteins into the mitochondrial inner membrane. Also required for the transfer of beta-barrel precursors from the TOM complex to the sorting and assembly machinery (SAM complex) of the outer membrane. Acts as a chaperone-like protein that protects the hydrophobic precursors from aggregation and guide them through the mitochondrial intermembrane space. The TIMM8-TIMM13 complex mediates the import of proteins such as TIMM23, SLC25A12/ARALAR1 and SLC25A13/ARALAR2, while the predominant TIMM9-TIMM10 70 kDa complex mediates the import of much more proteins. This Homo sapiens (Human) protein is Mitochondrial import inner membrane translocase subunit Tim13 (TIMM13).